A 276-amino-acid polypeptide reads, in one-letter code: Rhomboid protease GlpG (276 aa).

6 helical membrane-spanning segments follow: residues 94 to 114, 142 to 162, 169 to 189, 192 to 212, 229 to 249, and 250 to 270; these read GPVT…MQIL, ALMH…WYLG, LGSG…GYVQ, FSGP…GYVW, LIIF…GMSM, and ANGA…VDSL. Catalysis depends on Ser-201, which acts as the Nucleophile. Residue His-254 is part of the active site.

Belongs to the peptidase S54 family.

Its subcellular location is the cell inner membrane. The catalysed reaction is Cleaves type-1 transmembrane domains using a catalytic dyad composed of serine and histidine that are contributed by different transmembrane domains.. Rhomboid-type serine protease that catalyzes intramembrane proteolysis. This is Rhomboid protease GlpG from Escherichia coli O7:K1 (strain IAI39 / ExPEC).